We begin with the raw amino-acid sequence, 535 residues long: Phosphoenolpyruvate carboxykinase (ATP) (535 aa).

Residues Arg59, Tyr201, and Lys207 each coordinate substrate. Residues Lys207, His226, and 243–251 (GLSGTGKTT) contribute to the ATP site. Mn(2+) is bound by residues Lys207 and His226. Residue Asp264 participates in Mn(2+) binding. ATP is bound by residues Glu292, Arg328, 444–445 (RI), and Thr450. Arg328 contributes to the substrate binding site.

It belongs to the phosphoenolpyruvate carboxykinase (ATP) family. Requires Mn(2+) as cofactor.

The protein resides in the cytoplasm. It carries out the reaction oxaloacetate + ATP = phosphoenolpyruvate + ADP + CO2. Its pathway is carbohydrate biosynthesis; gluconeogenesis. In terms of biological role, involved in the gluconeogenesis. Catalyzes the conversion of oxaloacetate (OAA) to phosphoenolpyruvate (PEP) through direct phosphoryl transfer between the nucleoside triphosphate and OAA. This chain is Phosphoenolpyruvate carboxykinase (ATP), found in Parabacteroides distasonis (strain ATCC 8503 / DSM 20701 / CIP 104284 / JCM 5825 / NCTC 11152).